A 268-amino-acid chain; its full sequence is Imidazole glycerol phosphate synthase subunit HisF (268 aa).

Active-site residues include Asp-12 and Asp-131.

The protein belongs to the HisA/HisF family. In terms of assembly, heterodimer of HisH and HisF.

It localises to the cytoplasm. It catalyses the reaction 5-[(5-phospho-1-deoxy-D-ribulos-1-ylimino)methylamino]-1-(5-phospho-beta-D-ribosyl)imidazole-4-carboxamide + L-glutamine = D-erythro-1-(imidazol-4-yl)glycerol 3-phosphate + 5-amino-1-(5-phospho-beta-D-ribosyl)imidazole-4-carboxamide + L-glutamate + H(+). The protein operates within amino-acid biosynthesis; L-histidine biosynthesis; L-histidine from 5-phospho-alpha-D-ribose 1-diphosphate: step 5/9. Its function is as follows. IGPS catalyzes the conversion of PRFAR and glutamine to IGP, AICAR and glutamate. The HisF subunit catalyzes the cyclization activity that produces IGP and AICAR from PRFAR using the ammonia provided by the HisH subunit. In Salinibacter ruber (strain DSM 13855 / M31), this protein is Imidazole glycerol phosphate synthase subunit HisF.